The chain runs to 179 residues: Large ribosomal subunit protein uL6 (179 aa).

Belongs to the universal ribosomal protein uL6 family. In terms of assembly, part of the 50S ribosomal subunit.

Its function is as follows. This protein binds to the 23S rRNA, and is important in its secondary structure. It is located near the subunit interface in the base of the L7/L12 stalk, and near the tRNA binding site of the peptidyltransferase center. In Prochlorococcus marinus (strain MIT 9312), this protein is Large ribosomal subunit protein uL6.